The sequence spans 1117 residues: Rhoptry apical surface protein 3 (1117 aa).

Polar residues predominate over residues 1-12; the sequence is MENRPRQQTSGH. Disordered regions lie at residues 1-27, 47-243, 258-301, 325-398, 415-442, 490-572, 600-619, and 654-736; these read MENRPRQQTSGHDCSLGTGDDLSSRPG, NHER…SHFT, DSER…NKGI, SDFK…SLST, WNHASPGEGEATEAAGASVSGSSSFLAA, AEAV…ESEL, RPLLSGPPEEEAGNAEELRS, and QDGT…RLQG. Composition is skewed to basic and acidic residues over residues 83–100, 197–209, and 275–300; these read DSNHTVEHEVIKEEDSQK, TPLRRVGEERHVS, and MKPKELDKEAERKQEQLRSSKGDNKG. Low complexity-rich tracts occupy residues 418 to 442 and 490 to 508; these read ASPGEGEATEAAGASVSGSSSFLAA and AEAVAAVGQSSSDSSGDSS. Over residues 510 to 520 the composition is skewed to basic and acidic residues; it reads ESDHSGRERSR. The span at 530 to 540 shows a compositional bias: polar residues; it reads NEITTMRSQRS. The segment covering 546–555 has biased composition (basic and acidic residues); the sequence is FSREPERESD. The segment covering 557–569 has biased composition (polar residues); sequence GEMTPTGETSGSE. Residues 724-734 show a composition bias toward basic and acidic residues; that stretch reads DADRKQEEKRL. The BSD domain maps to 752 to 788; sequence MLSVDRRLRKLHSDTAVRRMGETEFWKLYFYQVFLLM. Polar residues predominate over residues 829-838; the sequence is QTSGFTESDT. Disordered stretches follow at residues 829–848, 858–891, 909–964, 1031–1066, and 1095–1117; these read QTSGFTESDTSSPSPSYGFA, IIPPTGLPDNTEEGEPLSFGGVSLEPKDEEAPEQ, RSPS…GDSP, SSSQVNGRVSTSRGTMGEDRHQDQQGDNRLEGPSHL, and GTCGDTHQPGLACKGKEVQGARA. Low complexity predominate over residues 839–848; sequence SSPSPSYGFA. Residues 909-931 are compositionally biased toward low complexity; that stretch reads RSPSLSSSSSGTTSVSARGTGSS. A compositionally biased stretch (polar residues) spans 1031 to 1044; sequence SSSQVNGRVSTSRG. Basic and acidic residues-rich tracts occupy residues 1046–1062 and 1108–1117; these read MGEDRHQDQQGDNRLEG and KGKEVQGARA.

Interacts with RASP2.

It localises to the cytoplasmic vesicle. It is found in the secretory vesicle. The protein resides in the rhoptry membrane. This Toxoplasma gondii (strain ATCC 50853 / GT1) protein is Rhoptry apical surface protein 3.